Consider the following 729-residue polypeptide: FYN-binding protein 2 (729 aa).

Disordered stretches follow at residues 18-130 (KFNA…EEKG), 170-320 (EGQK…SAEL), 371-408 (ELSP…PPKV), and 469-490 (VTKE…KTYD). 4 stretches are compositionally biased toward polar residues: residues 69-81 (GVSQ…TLKS), 89-99 (KTSSSSGTPEK), 190-216 (GAQT…SSVS), and 226-240 (KSPA…SQCQ). The span at 275-284 (GPPPPKPSKP) shows a compositional bias: pro residues. The segment covering 374-402 (PRPKEEENTMEEKESWESEPLEPRKELHP) has biased composition (basic and acidic residues). Residues 473-485 (TPSPSTIRSSSSS) show a composition bias toward low complexity. The residue at position 489 (Tyr489) is a Phosphotyrosine. The short motif at 520–523 (YEDI) is the SH2-binding; to LCP2 element. The disordered stretch occupies residues 576-603 (DLGPRSQDDSQDGIIYDDVDTREKESND). Positions 584 to 593 (DSQDGIIYDD) are enriched in acidic residues. Position 591 is a phosphotyrosine (Tyr591). Residues 594 to 603 (VDTREKESND) show a composition bias toward basic and acidic residues. The region spanning 668-728 (LVINRAVACA…LVEHLDFKHQ (61 aa)) is the SH3 domain.

In terms of assembly, interacts with SKAP1, LCK and FYN. The phosphorylated form interacts with LCP2. Phosphorylation is required for its function in T-cell activation.

The protein localises to the membrane raft. Its function is as follows. Adapter protein that plays a role in T-cell receptor (TCR)-mediated activation of signaling pathways. Required for T-cell activation and integrin-mediated T-cell adhesion in response to TCR stimulation. In Mus musculus (Mouse), this protein is FYN-binding protein 2.